The following is an 89-amino-acid chain: HssA/B-like protein 10 (89 aa).

Belongs to the hssA/B family.

This chain is HssA/B-like protein 10 (hssl10), found in Dictyostelium discoideum (Social amoeba).